The sequence spans 172 residues: Adenine phosphoribosyltransferase (172 aa).

This sequence belongs to the purine/pyrimidine phosphoribosyltransferase family. As to quaternary structure, homodimer.

It localises to the cytoplasm. The catalysed reaction is AMP + diphosphate = 5-phospho-alpha-D-ribose 1-diphosphate + adenine. It participates in purine metabolism; AMP biosynthesis via salvage pathway; AMP from adenine: step 1/1. Its function is as follows. Catalyzes a salvage reaction resulting in the formation of AMP, that is energically less costly than de novo synthesis. The chain is Adenine phosphoribosyltransferase from Methanococcus maripaludis (strain C7 / ATCC BAA-1331).